The primary structure comprises 356 residues: 3,4-dihydroxy-2-butanone 4-phosphate synthase (356 aa).

A DHBP synthase region spans residues 1 to 211 (MNAILSDQKT…ISDIVEYRMM (211 aa)). D-ribulose 5-phosphate contacts are provided by residues 38–39 (RE), aspartate 43, 150–154 (RIGHT), and glutamate 174. Residue glutamate 39 participates in Mg(2+) binding. Histidine 153 lines the Mg(2+) pocket. The tract at residues 212-356 (NESLIRVIAE…KSTNVNETVA (145 aa)) is GTP cyclohydrolase II-like.

It in the N-terminal section; belongs to the DHBP synthase family. In the C-terminal section; belongs to the GTP cyclohydrolase II family. The cofactor is Mg(2+). It depends on Mn(2+) as a cofactor.

The catalysed reaction is D-ribulose 5-phosphate = (2S)-2-hydroxy-3-oxobutyl phosphate + formate + H(+). The protein operates within cofactor biosynthesis; riboflavin biosynthesis; 2-hydroxy-3-oxobutyl phosphate from D-ribulose 5-phosphate: step 1/1. In terms of biological role, catalyzes the conversion of D-ribulose 5-phosphate to formate and 3,4-dihydroxy-2-butanone 4-phosphate. The sequence is that of 3,4-dihydroxy-2-butanone 4-phosphate synthase (ribB) from Sulfurospirillum multivorans (Dehalospirillum multivorans).